We begin with the raw amino-acid sequence, 726 residues long: Mitotic spindle checkpoint protein MAD1 (726 aa).

Residues 1-30 are disordered; that stretch reads MILRTPQPKRLRSDAGESPFPTGATGSGNQ. Coiled coils occupy residues 68-246 and 272-625; these read ADVL…LKLI and SDNS…VFAD.

This sequence belongs to the MAD1 family. Homodimer. Part of the mitotic checkpoint complex (MCC). Interacts with MAD2 and NUA.

Its subcellular location is the nucleus envelope. Required for the execution of the mitotic checkpoint which monitors the process of kinetochore-spindle attachment and delays the onset of anaphase when this process is not complete. It inhibits the activity of the anaphase promoting complex by sequestering CDC20 until all chromosomes are aligned at the metaphase plate. Required for anchoring MAD2 to the nuclear envelope. In Arabidopsis thaliana (Mouse-ear cress), this protein is Mitotic spindle checkpoint protein MAD1.